The following is a 102-amino-acid chain: Large ribosomal subunit protein bL21 (102 aa).

This sequence belongs to the bacterial ribosomal protein bL21 family. Part of the 50S ribosomal subunit. Contacts protein L20.

Its function is as follows. This protein binds to 23S rRNA in the presence of protein L20. The chain is Large ribosomal subunit protein bL21 from Sulfurimonas denitrificans (strain ATCC 33889 / DSM 1251) (Thiomicrospira denitrificans (strain ATCC 33889 / DSM 1251)).